We begin with the raw amino-acid sequence, 701 residues long: Polyribonucleotide nucleotidyltransferase (701 aa).

Residues D487 and D493 each contribute to the Mg(2+) site. A KH domain is found at 554-613; it reads PTMIAMKIDTDKIRDVIGKGGATIRAICEETKASIDIEDDGSIKIFGETKEAADAAKQRI. One can recognise an S1 motif domain in the interval 623 to 691; sequence GKIYVGKVER…NRGRIKLSIK (69 aa).

It belongs to the polyribonucleotide nucleotidyltransferase family. As to quaternary structure, component of the RNA degradosome, which is a multiprotein complex involved in RNA processing and mRNA degradation. Requires Mg(2+) as cofactor.

It is found in the cytoplasm. The catalysed reaction is RNA(n+1) + phosphate = RNA(n) + a ribonucleoside 5'-diphosphate. Functionally, involved in mRNA degradation. Catalyzes the phosphorolysis of single-stranded polyribonucleotides processively in the 3'- to 5'-direction. The chain is Polyribonucleotide nucleotidyltransferase from Pseudomonas putida (Arthrobacter siderocapsulatus).